Reading from the N-terminus, the 137-residue chain is uncharacterized protein (137 aa).

This is an uncharacterized protein from Archaeoglobus fulgidus (strain ATCC 49558 / DSM 4304 / JCM 9628 / NBRC 100126 / VC-16).